The following is a 101-amino-acid chain: Small ribosomal subunit protein uS14 (101 aa).

A disordered region spans residues 36-61; the sequence is ASAEDRRAARQKLQSLPRNSSPVRQR. Residues 47–59 are compositionally biased toward polar residues; the sequence is KLQSLPRNSSPVR.

The protein belongs to the universal ribosomal protein uS14 family. Part of the 30S ribosomal subunit. Contacts proteins S3 and S10.

Its function is as follows. Binds 16S rRNA, required for the assembly of 30S particles and may also be responsible for determining the conformation of the 16S rRNA at the A site. The protein is Small ribosomal subunit protein uS14 of Methylobacillus flagellatus (strain ATCC 51484 / DSM 6875 / VKM B-1610 / KT).